Reading from the N-terminus, the 201-residue chain is Receptor expression-enhancing protein 6 (201 aa).

3 consecutive transmembrane segments (helical) span residues Leu36–Leu56, Trp89–Phe109, and Cys117–His137.

It belongs to the DP1 family. In terms of assembly, interacts with STX3. Interacts with clathrin. In terms of tissue distribution, expressed in the inner segment of rod photoreceptors and outer plexiform layer of the retina (at protein level). Expressed in liver, but not detected in brain, muscle, kidney, retinal cone photoreceptors or retinal ganglion cells (at protein level). Highly expressed in the ganglion cell layer of the retina and in liver, and also detected at low levels in kidney and testis. Isoform 1: Expressed in the retina. Isoform 2: Expressed in liver.

Its subcellular location is the endoplasmic reticulum membrane. It localises to the cytoplasmic vesicle. It is found in the clathrin-coated vesicle membrane. In terms of biological role, required for correct function and survival of retinal photoreceptors. Required for retinal development. In rod photoreceptors, facilitates stability and/or trafficking of guanylate cyclases and is required to maintain endoplasmic reticulum and mitochondrial homeostasis. May play a role in clathrin-coated intracellular vesicle trafficking of proteins from the endoplasmic reticulum to the retinal rod plasma membrane. This is Receptor expression-enhancing protein 6 (Reep6) from Mus musculus (Mouse).